Here is an 802-residue protein sequence, read N- to C-terminus: LPS-assembly protein LptD (802 aa).

Positions 1-29 (MARLFSLKPLVLALGFCFGTHCAAADAVA) are cleaved as a signal peptide.

The protein belongs to the LptD family. In terms of assembly, component of the lipopolysaccharide transport and assembly complex. Interacts with LptE and LptA.

It is found in the cell outer membrane. In terms of biological role, together with LptE, is involved in the assembly of lipopolysaccharide (LPS) at the surface of the outer membrane. This Neisseria meningitidis serogroup A / serotype 4A (strain DSM 15465 / Z2491) protein is LPS-assembly protein LptD.